Reading from the N-terminus, the 315-residue chain is MDNPARKQRGAEKTARIPIKIVPAERLKKPDWIRIRLGAGAEAERFNEIKQTLREHKLHTVCEEASCPNIHECFGKGTATFMIMGDICTRRCPFCDVGHGRPEPLNPNEPTDLARTIAAMRLNYVVITSVDRDDLRDGGAQHFVDCIRETRAASPSTTIEVLVPDFRGRMEIALEIFNQAPPDVMNHNMETVPRLYKQARPGADYAYSLRLLKEFKAGHPDVLTKSGLMVGLGETDDEILDVMRDLRAHDVDMLTIGQYLQPSGGHLPVLRYVHPDTFKMFETEALRMGFRNAACGPMVRSSYWADQQAHGAGVV.

Cys-62, Cys-67, Cys-73, Cys-88, Cys-92, Cys-95, and Ser-302 together coordinate [4Fe-4S] cluster. A Radical SAM core domain is found at 74 to 291 (FGKGTATFMI…ETEALRMGFR (218 aa)).

It belongs to the radical SAM superfamily. Lipoyl synthase family. [4Fe-4S] cluster is required as a cofactor.

It is found in the cytoplasm. It catalyses the reaction [[Fe-S] cluster scaffold protein carrying a second [4Fe-4S](2+) cluster] + N(6)-octanoyl-L-lysyl-[protein] + 2 oxidized [2Fe-2S]-[ferredoxin] + 2 S-adenosyl-L-methionine + 4 H(+) = [[Fe-S] cluster scaffold protein] + N(6)-[(R)-dihydrolipoyl]-L-lysyl-[protein] + 4 Fe(3+) + 2 hydrogen sulfide + 2 5'-deoxyadenosine + 2 L-methionine + 2 reduced [2Fe-2S]-[ferredoxin]. It participates in protein modification; protein lipoylation via endogenous pathway; protein N(6)-(lipoyl)lysine from octanoyl-[acyl-carrier-protein]: step 2/2. In terms of biological role, catalyzes the radical-mediated insertion of two sulfur atoms into the C-6 and C-8 positions of the octanoyl moiety bound to the lipoyl domains of lipoate-dependent enzymes, thereby converting the octanoylated domains into lipoylated derivatives. The chain is Lipoyl synthase from Azoarcus sp. (strain BH72).